Reading from the N-terminus, the 292-residue chain is Ribosomal RNA small subunit methyltransferase H (292 aa).

S-adenosyl-L-methionine-binding positions include 32–34 (GGH), Asp51, Leu87, Asp101, and Gln108.

Belongs to the methyltransferase superfamily. RsmH family.

It is found in the cytoplasm. The enzyme catalyses cytidine(1402) in 16S rRNA + S-adenosyl-L-methionine = N(4)-methylcytidine(1402) in 16S rRNA + S-adenosyl-L-homocysteine + H(+). Specifically methylates the N4 position of cytidine in position 1402 (C1402) of 16S rRNA. The protein is Ribosomal RNA small subunit methyltransferase H of Pseudothermotoga lettingae (strain ATCC BAA-301 / DSM 14385 / NBRC 107922 / TMO) (Thermotoga lettingae).